Consider the following 101-residue polypeptide: Urease subunit beta (101 aa).

This sequence belongs to the urease beta subunit family. Heterotrimer of UreA (gamma), UreB (beta) and UreC (alpha) subunits. Three heterotrimers associate to form the active enzyme.

It is found in the cytoplasm. The enzyme catalyses urea + 2 H2O + H(+) = hydrogencarbonate + 2 NH4(+). The protein operates within nitrogen metabolism; urea degradation; CO(2) and NH(3) from urea (urease route): step 1/1. The chain is Urease subunit beta from Ralstonia nicotianae (strain ATCC BAA-1114 / GMI1000) (Ralstonia solanacearum).